Reading from the N-terminus, the 2472-residue chain is Highly reducing polyketide synthase xilA (2472 aa).

The Ketosynthase family 3 (KS3) domain occupies 1-417; that stretch reads MPGGVRDLPA…GTNGHCIIDD (417 aa). Catalysis depends on for beta-ketoacyl synthase activity residues cysteine 162, histidine 298, and histidine 340. The segment at 442-502 is disordered; sequence NDINGKSGTN…QRKHHHPKTD (61 aa). Residues 450-489 are compositionally biased toward low complexity; the sequence is TNGANGANRVNGVNGVNGVNGVNGANGHSNASLLSNGSNN. The 336-residue stretch at 597–932 folds into the Malonyl-CoA:ACP transacylase (MAT) domain; sequence FIFTGQGAQW…CTGTLFVHNV (336 aa). The interval 991–1129 is N-terminal hotdog fold; that stretch reads HDLLGSKVPG…GQIKVEVAKF (139 aa). Residues 991–1294 form the PKS/mFAS DH domain; it reads HDLLGSKVPG…FTSLNNEQES (304 aa). Histidine 1023 acts as the Proton acceptor; for dehydratase activity in catalysis. The C-terminal hotdog fold stretch occupies residues 1141–1294; the sequence is GRLVDAQTWY…FTSLNNEQES (154 aa). Aspartate 1207 functions as the Proton donor; for dehydratase activity in the catalytic mechanism. The methyltransferase (CMeT) domain stretch occupies residues 1289–1505; sequence NNEQESPSTG…IITVHALRSI (217 aa). One can recognise an Enoyl reductase (ER) domain in the interval 1724–2036; it reads GLLTSLYFKP…KGTHIGKMVI (313 aa). Residues 2060–2239 enclose the Ketoreductase (KR) domain; that stretch reads ASYILVGGLS…ATTVSLGFIK (180 aa). Residues 2391 to 2469 form the Carrier domain; it reads ETVKLVSDAI…SIARVIVEEA (79 aa). Serine 2428 carries the post-translational modification O-(pantetheine 4'-phosphoryl)serine.

Pantetheine 4'-phosphate is required as a cofactor.

It functions in the pathway secondary metabolite biosynthesis. In terms of biological role, highly reducing polyketide synthase; part of the gene cluster that mediates the biosynthesis of the 6-methyl-2-pyrone derivative xylariolide D. XilA produces the 5-alkyl-6-methyl-2-pyrone backbone called prexylariolide D via sequential condensations of 4 malonyl-CoA units with one acetyl-CoA starter unit. During the biosynthesis, the linear polyketide chain is branched by the addition of an acetyl unit as the origin of the methyl group at the 2-pyrone ring. Prexylariolide D is then hydroxylated at the side chain by xilC to form the final product, xylariolide D. The sequence is that of Highly reducing polyketide synthase xilA from Penicillium crustosum (Blue mold fungus).